Reading from the N-terminus, the 71-residue chain is Ranatuerin-2P (71 aa).

Residues 1-20 (MFTMKKSLLLFFFLGTISLS) form the signal peptide. Residues 21–44 (LCEQERGADEDDGVEITEEEVKRG) constitute a propeptide that is removed on maturation. A disulfide bond links Cys66 and Cys71.

As to expression, expressed by the skin glands.

It is found in the secreted. Its function is as follows. Antibacterial activity against Gram-positive bacterium S.aureus and Gram-negative bacterium E.coli. Has activity against C.albicans. This chain is Ranatuerin-2P, found in Lithobates pipiens (Northern leopard frog).